The following is a 545-amino-acid chain: MLCFQCEQTHSGTGCVIRGVCTKTPEVAAIQDLMIFASAGLSYVAKKLPDSCEAERKEAASLVIQALFSTVTNVNFDADVLTKALYHLVDFRDALKAKLPEDVELPLAATLDFSRDRETLVKQGESYGIASRQKTLGIDVTGLQELLTYGMKGMAAYAHHAAVLDYRDPDVDNFLLEGMAALTDHSLDIQALLAVVMRCGEASYKTLALLDKANTSSFGHPVPTNVKMGPSKGKAILVSGHDLLDMKELLEQTKDTGIKVYTHGEMLPAHGYPELNKYPHLAGHYGGAWMLQRQEFINFPGPIVMTTNCLMEPRKEYAGRVFTRDLVGWPGLTHLPDRDFSKVIEAALESEGFTEDQESRSHIAGFGHHTVLDSADAVVSAIKKGDIKHFMLVGGCDGIKSGRHYFTDIAEKAPKDWVILTLGCGKFRVTDLDLGKIGDLPRLLDMGQCNDSYSAIRVALALAEAFDTDVNSLPLSLVLSWYEQKAVCVLLALLHLGVKGIRLGPTLPAFITPNMLKILVDNFDIKPIGNSAEEDLQEILAAKAA.

The [4Fe-4S] cluster site is built by Cys-3, Cys-6, Cys-15, and Cys-21. Hybrid [4Fe-2O-2S] cluster is bound by residues His-241, Glu-265, Cys-309, Cys-396, Cys-424, Cys-449, Glu-483, and Lys-485. Cys-396 bears the Cysteine persulfide mark.

This sequence belongs to the HCP family. It depends on [4Fe-4S] cluster as a cofactor. Hybrid [4Fe-2O-2S] cluster serves as cofactor.

Its subcellular location is the cytoplasm. It catalyses the reaction A + NH4(+) + H2O = hydroxylamine + AH2 + H(+). In terms of biological role, catalyzes the reduction of hydroxylamine to form NH(3) and H(2)O. This is Hydroxylamine reductase from Zymomonas mobilis subsp. mobilis (strain ATCC 31821 / ZM4 / CP4).